A 163-amino-acid polypeptide reads, in one-letter code: Putative pre-16S rRNA nuclease (163 aa).

This sequence belongs to the YqgF nuclease family.

Its subcellular location is the cytoplasm. In terms of biological role, could be a nuclease involved in processing of the 5'-end of pre-16S rRNA. This chain is Putative pre-16S rRNA nuclease, found in Rhizobium leguminosarum bv. trifolii (strain WSM2304).